Reading from the N-terminus, the 277-residue chain is MRGASHLQILLLLVLGTRMQECAACGQPRMSSRIVGGRDAQDGEWPWQTSIQHRGAHVCGGSLIAPQWVLTAGHCFPRRVWPSEYSVLLGALSLDVRSSHELLVPVLRVLLPPDYSEDEARGDLALLQLRHPVSLSTRIQPVCLPAPGSHPPPGSPCWVTGWGSLSPGVPLPKGRPLQGVRVPLLDSRACDRLYHVGANVPQGERIVLPGNLCAGYRRGHKDACQGDSGGPLTCMESGHWVLVGVVSWGKGCALPNRPGVYTNVAKYSPWIQARLSL.

The N-terminal stretch at 1 to 24 (MRGASHLQILLLLVLGTRMQECAA) is a signal peptide. Positions 34–276 (IVGGRDAQDG…YSPWIQARLS (243 aa)) constitute a Peptidase S1 domain. A disulfide bond links C59 and C75. Residues H74 and D123 each act as charge relay system in the active site. Intrachain disulfides connect C157-C234, C190-C213, and C224-C252. S228 functions as the Charge relay system in the catalytic mechanism.

The protein belongs to the peptidase S1 family. Post-translationally, not glycosylated. Widely expressed.

The protein resides in the secreted. In terms of biological role, serine protease that has amidolytic activity, cleaving its substrates before Arg residues. In Mus musculus (Mouse), this protein is Serine protease 33 (Prss33).